The primary structure comprises 138 residues: MRLTQGAFSFLPDLTDQQINKQLAYIVSKGWSANVEYTDDPHPRNAYWELWGLPLFDVKDPAAVMYEINSCRKAKPSYYVKVNAFDNTRGVESCSMSFIVNRPANEPGFLLQRQDFEGRTMKYTLHSYATEKPEGARY.

It belongs to the RuBisCO small chain family. As to quaternary structure, heterohexadecamer of 8 large and 8 small subunits.

The protein resides in the plastid. The protein localises to the chloroplast. In terms of biological role, ruBisCO catalyzes two reactions: the carboxylation of D-ribulose 1,5-bisphosphate, the primary event in carbon dioxide fixation, as well as the oxidative fragmentation of the pentose substrate in the photorespiration process. Both reactions occur simultaneously and in competition at the same active site. Although the small subunit is not catalytic it is essential for maximal activity. The sequence is that of Ribulose bisphosphate carboxylase small subunit from Porphyra purpurea (Red seaweed).